Consider the following 416-residue polypeptide: WD repeat-containing protein JIP5 (416 aa).

WD repeat units follow at residues 9 to 48, 62 to 101, and 112 to 151; these read PLSS…ENGK, RHKG…VEWK, and GFQV…TEVS. Residues 149–183 form a disordered region; sequence EVSARPQQTHHPHDDYVSSLTPLPPSETSTSGYSK. The span at 166–179 shows a compositional bias: low complexity; it reads SSLTPLPPSETSTS. 3 WD repeats span residues 214–255, 264–308, and 309–348; these read ISSS…DQDE, DGGE…ISEL, and SHDD…EEGN. 2 stretches are compositionally biased toward acidic residues: residues 343–359 and 374–383; these read SDEE…DIEN and SDEEEDSDDD. Positions 343–416 are disordered; sequence SDEEGNDDES…VHVMAFKGLD (74 aa). Over residues 389-400 the composition is skewed to basic residues; the sequence is KGKRKKRKRGKG.

It belongs to the WD repeat WDR55 family.

Its subcellular location is the nucleus. It localises to the nucleolus. In Coccidioides immitis (strain RS) (Valley fever fungus), this protein is WD repeat-containing protein JIP5 (JIP5).